A 474-amino-acid polypeptide reads, in one-letter code: Gamma-aminobutyric acid receptor subunit gamma-2 (474 aa).

Residues methionine 1–serine 38 form the signal peptide. The Extracellular segment spans residues glutamine 39–phenylalanine 274. N-linked (GlcNAc...) asparagine glycosylation is found at asparagine 51 and asparagine 128. A disulfide bridge connects residues cysteine 189 and cysteine 203. A glycan (N-linked (GlcNAc...) asparagine) is linked at asparagine 246. The chain crosses the membrane as a helical span at residues threonine 275–isoleucine 295. Residues asparagine 296 to proline 301 are Cytoplasmic-facing. The chain crosses the membrane as a helical span at residues alanine 302–alanine 321. The Extracellular portion of the chain corresponds to arginine 322 to alanine 333. Residues methionine 334–phenylalanine 358 traverse the membrane as a helical segment. The Cytoplasmic portion of the chain corresponds to valine 359 to serine 450. Residue serine 381 is modified to Phosphoserine; by PKC. The helical transmembrane segment at tyrosine 451–leucine 472 threads the bilayer. Topologically, residues tyrosine 473–leucine 474 are extracellular.

The protein belongs to the ligand-gated ion channel (TC 1.A.9) family. Gamma-aminobutyric acid receptor (TC 1.A.9.5) subfamily. GABRG2 sub-subfamily. Heteropentamer, formed by a combination of alpha (GABRA1-6), beta (GABRB1-3), gamma (GABRG1-3), delta (GABRD), epsilon (GABRE), rho (GABRR1-3), pi (GABRP) and theta (GABRQ) chains, each subunit exhibiting distinct physiological and pharmacological properties. Interacts with GABARAP. Interacts with KIF21B. Identified in a complex of 720 kDa composed of LHFPL4, NLGN2, GABRA1, GABRB2, GABRG2 and GABRB3. Interacts with LHFPL4. Interacts with SHISA7; interaction leads to the regulation of GABA(A) receptor trafficking, channel deactivation kinetics and pharmacology. Glycosylated. Post-translationally, palmitoylated by ZDHHC3/GODZ; required for the accumulation of GABA(A) receptors at the postsynaptic membrane of inhibitory GABAergic synapses. Expressed in brain neurons (at protein level).

The protein resides in the postsynaptic cell membrane. Its subcellular location is the cell membrane. It is found in the cell projection. It localises to the dendrite. The protein localises to the cytoplasmic vesicle membrane. The catalysed reaction is chloride(in) = chloride(out). Its activity is regulated as follows. Allosterically activated by benzodiazepines. Activated by pentobarbital. Inhibited by the antagonist bicuculline. Inhibited by zinc ions. Potentiated by histamine. In terms of biological role, gamma subunit of the heteropentameric ligand-gated chloride channel gated by gamma-aminobutyric acid (GABA), a major inhibitory neurotransmitter in the brain. GABA-gated chloride channels, also named GABA(A) receptors (GABAAR), consist of five subunits arranged around a central pore and contain GABA active binding site(s) located at the alpha and beta subunit interface(s). When activated by GABA, GABAARs selectively allow the flow of chloride anions across the cell membrane down their electrochemical gradient. Gamma-2/GABRG2-containing GABAARs are found at both synaptic and extrasynaptic sites. Chloride influx into the postsynaptic neuron following GABAAR opening decreases the neuron ability to generate a new action potential, thereby reducing nerve transmission. GABAARs containing alpha-1 and beta-2 or -3 subunits exhibit synaptogenic activity; the gamma-2 subunit being necessary but not sufficient to induce rapid synaptic contacts formation. Extrasynaptic gamma-2-containing receptors contribute to the tonic GABAergic inhibition. GABAARs function also as histamine receptor where histamine binds at the interface of two neighboring beta subunits and potentiates GABA response in a gamma-2 subunit-controlled manner. This is Gamma-aminobutyric acid receptor subunit gamma-2 from Mus musculus (Mouse).